A 482-amino-acid polypeptide reads, in one-letter code: MKFIIKLFPEITIKSQSVRLRFIKILTGNIRNVLKHYDETLAVVRHWDHIEVRAKDESQRSAIRDALTRIPGIHHILEVEDHAYTDVHNIFEQALALYREQLEGKTFCVRVKRRGKHEFSSQDVERYVGGGLNQHIETARVNLTAPQVTVHLEIEQDRLLLIKGRYEGIGGFPIGTQEDVLSLISGGFDSGVSSYMLMRRGCRVHYCFFNLGGAAHEIGVKQVAHYLWNRFGSSHRVRFIAIDFDPVVGEILEKVDDGQMGVVLKRMMVRAASKIAERYGVQALVTGEALGQVSSQTLTNLRLIDNASDTLILRPLISHDKEHIIKQARELGTEDFAKTMPEYCGVISKSPTVKAVKAKIEAEESHFDFAILERVVSEARNIDIRQIAEQTKQEVVEIETVASFAPTDVLLDIRSPDEQDDKPLELDQIEIKSLPFYKLGTQFGDLDQSKTYLLYCERGVMSRLQALYLREQGFSNVKVYRP.

The THUMP domain maps to 61–165; the sequence is SAIRDALTRI…QDRLLLIKGR (105 aa). ATP-binding positions include 183 to 184, lysine 265, glycine 287, and glutamine 296; that span reads LI. A disulfide bond links cysteine 344 and cysteine 456. In terms of domain architecture, Rhodanese spans 404–482; sequence FAPTDVLLDI…GFSNVKVYRP (79 aa). Cysteine 456 functions as the Cysteine persulfide intermediate in the catalytic mechanism.

It belongs to the ThiI family.

It is found in the cytoplasm. The enzyme catalyses [ThiI sulfur-carrier protein]-S-sulfanyl-L-cysteine + a uridine in tRNA + 2 reduced [2Fe-2S]-[ferredoxin] + ATP + H(+) = [ThiI sulfur-carrier protein]-L-cysteine + a 4-thiouridine in tRNA + 2 oxidized [2Fe-2S]-[ferredoxin] + AMP + diphosphate. It carries out the reaction [ThiS sulfur-carrier protein]-C-terminal Gly-Gly-AMP + S-sulfanyl-L-cysteinyl-[cysteine desulfurase] + AH2 = [ThiS sulfur-carrier protein]-C-terminal-Gly-aminoethanethioate + L-cysteinyl-[cysteine desulfurase] + A + AMP + 2 H(+). Its pathway is cofactor biosynthesis; thiamine diphosphate biosynthesis. Catalyzes the ATP-dependent transfer of a sulfur to tRNA to produce 4-thiouridine in position 8 of tRNAs, which functions as a near-UV photosensor. Also catalyzes the transfer of sulfur to the sulfur carrier protein ThiS, forming ThiS-thiocarboxylate. This is a step in the synthesis of thiazole, in the thiamine biosynthesis pathway. The sulfur is donated as persulfide by IscS. The protein is tRNA sulfurtransferase of Pectobacterium carotovorum subsp. carotovorum (strain PC1).